The following is a 247-amino-acid chain: Adenosylcobinamide-GDP ribazoletransferase (247 aa).

5 helical membrane passes run 34-54 (IITFPLIGLLLGAISGLVFMV), 59-79 (CGAPLAALFSVLVLVLMTGGF), 113-133 (GGLALIFVVLAKILVLSELAL), 138-158 (ILASLAAACAVSRGTAALLMY), and 194-214 (VLLPGMHGVAAMVVTMVAIFI).

This sequence belongs to the CobS family. Requires Mg(2+) as cofactor.

Its subcellular location is the cell inner membrane. The enzyme catalyses alpha-ribazole + adenosylcob(III)inamide-GDP = adenosylcob(III)alamin + GMP + H(+). The catalysed reaction is alpha-ribazole 5'-phosphate + adenosylcob(III)inamide-GDP = adenosylcob(III)alamin 5'-phosphate + GMP + H(+). It functions in the pathway cofactor biosynthesis; adenosylcobalamin biosynthesis; adenosylcobalamin from cob(II)yrinate a,c-diamide: step 7/7. Joins adenosylcobinamide-GDP and alpha-ribazole to generate adenosylcobalamin (Ado-cobalamin). Also synthesizes adenosylcobalamin 5'-phosphate from adenosylcobinamide-GDP and alpha-ribazole 5'-phosphate. In Escherichia coli O81 (strain ED1a), this protein is Adenosylcobinamide-GDP ribazoletransferase.